A 407-amino-acid chain; its full sequence is Peptidase T (407 aa).

Position 78 (His-78) interacts with Zn(2+). The active site involves Asp-80. Asp-139 contacts Zn(2+). The active-site Proton acceptor is Glu-173. Residues Glu-174, Asp-196, and His-378 each coordinate Zn(2+).

The protein belongs to the peptidase M20B family. Requires Zn(2+) as cofactor.

The protein resides in the cytoplasm. It catalyses the reaction Release of the N-terminal residue from a tripeptide.. Cleaves the N-terminal amino acid of tripeptides. The chain is Peptidase T from Shewanella pealeana (strain ATCC 700345 / ANG-SQ1).